The chain runs to 194 residues: NADH-ubiquinone oxidoreductase subunit NUO2 (194 aa).

Fungal-specific subunit of the mitochondrial membrane respiratory chain NADH dehydrogenase (Complex I). Complex I functions in the transfer of electrons from NADH to the respiratory chain. The immediate electron acceptor for the enzyme is believed to be ubiquinone. Plays a role in cell wall integrity and is involved in osmotic and oxidative resistance, yeast to hypha transition, and virulence via providing the ability to damage and invade host cells such as oral epithelial cells. The chain is NADH-ubiquinone oxidoreductase subunit NUO2 from Candida albicans (strain SC5314 / ATCC MYA-2876) (Yeast).